Here is a 230-residue protein sequence, read N- to C-terminus: uncharacterized protein (230 aa).

Catalysis depends on charge relay system residues S124 and H158.

This sequence belongs to the peptidase S51 family.

This is an uncharacterized protein from Bacillus subtilis (strain 168).